The sequence spans 61 residues: Large ribosomal subunit protein bL32 (61 aa).

The protein belongs to the bacterial ribosomal protein bL32 family.

The sequence is that of Large ribosomal subunit protein bL32 from Hyphomonas neptunium (strain ATCC 15444).